Here is a 61-residue protein sequence, read N- to C-terminus: MAISKASIVVLMMVIISVVASAQSEAPAPSPTSGSSAISASFVSAGVAAVAALVFGSALRI.

Residues 1 to 22 (MAISKASIVVLMMVIISVVASA) form the signal peptide. Glutamine 23 carries the pyrrolidone carboxylic acid modification. 3 positions are modified to 4-hydroxyproline: proline 27, proline 29, and proline 31. Proline 27, proline 29, and proline 31 each carry an O-linked (Ara...) hydroxyproline glycan. Serine 35 is lipidated: GPI-anchor amidated serine. Residues 36 to 61 (SAISASFVSAGVAAVAALVFGSALRI) constitute a propeptide, removed in mature form.

Belongs to the AG-peptide AGP family. Post-translationally, contains 4-hydroxyproline; hydroxylated on Pro-27, Pro-29 and Pro-31. O-glycosylated on hydroxyprolines; noncontiguous hydroxylproline residues are glycosylated with arabinogalactan. Expressed in reproductive tissues. Expressed in chalaza, funiculus, stigma, septum, style, integument and transmitting tract.

It localises to the cell membrane. In terms of biological role, proteoglycan that seems to be implicated in diverse developmental roles such as differentiation, cell-cell recognition, embryogenesis and programmed cell death. This chain is Arabinogalactan protein 15, found in Arabidopsis thaliana (Mouse-ear cress).